Consider the following 89-residue polypeptide: Large ribosomal subunit protein bL31B (89 aa).

It belongs to the bacterial ribosomal protein bL31 family. Type B subfamily. Part of the 50S ribosomal subunit.

The polypeptide is Large ribosomal subunit protein bL31B (Actinobacillus pleuropneumoniae serotype 5b (strain L20)).